We begin with the raw amino-acid sequence, 339 residues long: Protein FAM131B (339 aa).

The interval 1–22 (MDSTSSLHGSSLHRPSTEQTRT) is disordered. Serine 47, serine 114, and serine 117 each carry phosphoserine. A disordered region spans residues 222–339 (GPAFGDSQPS…PLLTQPSTPA (118 aa)). Composition is skewed to polar residues over residues 239-250 (QPASGYSAQEPS) and 324-339 (PTTS…STPA). Position 325 is a phosphothreonine (threonine 325). At serine 327 the chain carries Phosphoserine.

The protein belongs to the FAM131 family.

The polypeptide is Protein FAM131B (FAM131B) (Bos taurus (Bovine)).